The primary structure comprises 230 residues: Orotidine 5'-phosphate decarboxylase (230 aa).

Residues Asp-10, Lys-32, 59–68, Thr-119, Arg-180, Gln-189, Gly-209, and Arg-210 contribute to the substrate site; that span reads DLKYHDIPNT. Lys-61 serves as the catalytic Proton donor.

Belongs to the OMP decarboxylase family. Type 1 subfamily. In terms of assembly, homodimer.

The enzyme catalyses orotidine 5'-phosphate + H(+) = UMP + CO2. The protein operates within pyrimidine metabolism; UMP biosynthesis via de novo pathway; UMP from orotate: step 2/2. Catalyzes the decarboxylation of orotidine 5'-monophosphate (OMP) to uridine 5'-monophosphate (UMP). The protein is Orotidine 5'-phosphate decarboxylase of Haemophilus influenzae (strain ATCC 51907 / DSM 11121 / KW20 / Rd).